The sequence spans 436 residues: Transcriptional regulator dmxR14 (436 aa).

The segment covering 1–27 has biased composition (polar residues); the sequence is MEEAETNTQVDSVPSNSVRSGAELSSK. The disordered stretch occupies residues 1–32; the sequence is MEEAETNTQVDSVPSNSVRSGAELSSKSKLRD. Residues 34–61 constitute a DNA-binding region (zn(2)-C6 fungal-type); sequence CHACARSKVRCPKQKPSCSRCEARGTTC. The tract at residues 67-136 is disordered; it reads RRPGRRRETS…ITTVHNGPEN (70 aa). Over residues 90-136 the composition is skewed to polar residues; the sequence is SHANNRNSPSFSSTRSTLPSPIASDSNSNFTQPQNSSITTVHNGPEN.

The protein resides in the nucleus. Its function is as follows. Transcriptional regulator; part of the gene cluster that mediates the biosynthesis of the dimeric xanthones cryptosporioptides. In Cryptosporiopsis sp. (strain 8999), this protein is Transcriptional regulator dmxR14.